Here is a 345-residue protein sequence, read N- to C-terminus: Anthranilate phosphoribosyltransferase (345 aa).

Residues Gly-80, 83–84 (GD), Thr-88, 90–93 (NIST), 108–116 (KHGNRSVSS), and Ser-120 contribute to the 5-phospho-alpha-D-ribose 1-diphosphate site. Gly-80 serves as a coordination point for anthranilate. Residue Ser-92 coordinates Mg(2+). Asn-111 contacts anthranilate. Arg-166 contributes to the anthranilate binding site. The Mg(2+) site is built by Asp-225 and Glu-226.

It belongs to the anthranilate phosphoribosyltransferase family. As to quaternary structure, homodimer. Mg(2+) serves as cofactor.

The enzyme catalyses N-(5-phospho-beta-D-ribosyl)anthranilate + diphosphate = 5-phospho-alpha-D-ribose 1-diphosphate + anthranilate. Its pathway is amino-acid biosynthesis; L-tryptophan biosynthesis; L-tryptophan from chorismate: step 2/5. Its function is as follows. Catalyzes the transfer of the phosphoribosyl group of 5-phosphorylribose-1-pyrophosphate (PRPP) to anthranilate to yield N-(5'-phosphoribosyl)-anthranilate (PRA). The chain is Anthranilate phosphoribosyltransferase from Pelotomaculum thermopropionicum (strain DSM 13744 / JCM 10971 / SI).